A 155-amino-acid chain; its full sequence is UPF0266 membrane protein LMHCC_1856 (155 aa).

A run of 3 helical transmembrane segments spans residues 8–28, 46–66, and 70–90; these read IFLFAANILTVLYILYNDAVI, RWDGYIFVGIIVLLFVSNTFF, and PFSTSVLLGIMGVLFIYICFF.

The protein belongs to the UPF0266 family.

It is found in the cell membrane. This chain is UPF0266 membrane protein LMHCC_1856, found in Listeria monocytogenes serotype 4a (strain HCC23).